Reading from the N-terminus, the 218-residue chain is uncharacterized protein (218 aa).

A run of 2 helical transmembrane segments spans residues 8–28 and 158–178; these read LAVF…ATAG and ILFY…FLLI.

The protein resides in the cell membrane. This is an uncharacterized protein from Mycoplasma genitalium (strain ATCC 33530 / DSM 19775 / NCTC 10195 / G37) (Mycoplasmoides genitalium).